The primary structure comprises 281 residues: Mad-like protein 1 (281 aa).

A compositionally biased stretch (low complexity) spans 71–80; sequence SCASNASTSS. Residues 71–105 are disordered; that stretch reads SCASNASTSSQPYCSSPPARKSSKHSRTAHNELEK. The tract at residues 95 to 108 is basic motif; it reads HSRTAHNELEKTRR. Positions 95 to 147 constitute a bHLH domain; that stretch reads HSRTAHNELEKTRRANLRGCLETLKMLVPCVSDATRNTTLALLTRARDHIIEL. Positions 109–147 are helix-loop-helix motif; the sequence is ANLRGCLETLKMLVPCVSDATRNTTLALLTRARDHIIEL. Positions 144-185 form a coiled coil; that stretch reads IIELQDSNAAQMKKLNDLRDEQDELVAELAQLQADEEVAQAT. A disordered region spans residues 189–213; it reads CQTLSQSRPESRASSFTSTSSRDSP. The segment covering 200 to 212 has biased composition (low complexity); sequence RASSFTSTSSRDS.

As to quaternary structure, forms heterodimer with mxl-1 in the presence and absence of DNA. In terms of processing, ubiquitinated. In terms of tissue distribution, expressed in intestinal cells in adults. Expressed in D-type motor neuron cell bodies.

The protein localises to the nucleus. Functionally, transcriptional regulator which binds to the E box motif 5'-CACGTG-3', when in a heterodimeric complex with mxl-1. Involved in the control of lifespan in response to dietary restriction, the decline in protein homeostasis associated with normal aging, germline signaling and may overlap with the insulin-like signaling pathway. Plays a role in autophagy. Involved in promoting infection by the microsporidian pathogen N.parisii, possibly together with transcription factors pha-4 and zip-10. In response to neuronal injury, mdl-1 is targeted by sdz-33 for ubiquitin-mediated degradation, probably thereby reducing levels of mdl-1-mxl-1 heterodimers, allowing free mxl-1 to form complexes with tdpt-1 and thus inhibiting tdpt-1-dependent sumoylation of ets-4. This Caenorhabditis elegans protein is Mad-like protein 1.